The chain runs to 400 residues: Aspartate/prephenate aminotransferase (400 aa).

L-aspartate is bound by residues glycine 39, tryptophan 125, and asparagine 175. The residue at position 239 (lysine 239) is an N6-(pyridoxal phosphate)lysine. Residue arginine 375 participates in L-aspartate binding.

This sequence belongs to the class-I pyridoxal-phosphate-dependent aminotransferase family. In terms of assembly, homodimer. It depends on pyridoxal 5'-phosphate as a cofactor.

The protein resides in the cytoplasm. It carries out the reaction L-aspartate + 2-oxoglutarate = oxaloacetate + L-glutamate. The enzyme catalyses L-arogenate + 2-oxoglutarate = prephenate + L-glutamate. Its function is as follows. Catalyzes the reversible conversion of aspartate and 2-oxoglutarate to glutamate and oxaloacetate. Can also transaminate prephenate in the presence of glutamate. In Cereibacter sphaeroides (strain ATCC 17029 / ATH 2.4.9) (Rhodobacter sphaeroides), this protein is Aspartate/prephenate aminotransferase.